Here is a 358-residue protein sequence, read N- to C-terminus: WD repeat-containing protein 53 (358 aa).

6 WD repeats span residues 1-38 (MAVK…AWGE), 43-80 (LGHT…VLDV), 85-123 (DSLD…ILDL), 127-166 (KVIR…LWSL), 173-225 (WITN…RIFR), and 232-270 (EQEL…LWDA). The interval 273 to 311 (EVEKKQKSPTKRTHRKKPKRGTCTKQGGNTNASVTDEEE) is disordered. Over residues 279-294 (KSPTKRTHRKKPKRGT) the composition is skewed to basic residues. Residues 295 to 306 (CTKQGGNTNASV) are compositionally biased toward polar residues. A WD 7 repeat occupies 314-355 (NILPKLNIEHGEKVNWLLGTKIKGHQNILVADQTSCISVYPL).

Belongs to the WD repeat WDR53 family.

The sequence is that of WD repeat-containing protein 53 (WDR53) from Homo sapiens (Human).